A 122-amino-acid polypeptide reads, in one-letter code: MNTMILSEYLSVLIFFIFSFGLSCIILGLSYVLATQNADTEKLSPYECGFNPFDDARGAFDVRFYLVAILFIIFDLEVAFLFPWAVALSDVTIFGFWTMFIFLLILTVGFIYEWKKGALDWE.

3 helical membrane-spanning segments follow: residues 12 to 32 (VLIF…LSYV), 66 to 86 (LVAI…PWAV), and 91 to 111 (VTIF…VGFI).

This sequence belongs to the complex I subunit 3 family.

It localises to the mitochondrion membrane. The catalysed reaction is a ubiquinone + NADH + 5 H(+)(in) = a ubiquinol + NAD(+) + 4 H(+)(out). Core subunit of the mitochondrial membrane respiratory chain NADH dehydrogenase (Complex I) that is believed to belong to the minimal assembly required for catalysis. Complex I functions in the transfer of electrons from NADH to the respiratory chain. The immediate electron acceptor for the enzyme is believed to be ubiquinone. This Reclinomonas americana protein is NADH-ubiquinone oxidoreductase chain 3 (NAD3).